The primary structure comprises 90 residues: Inactive casein kinase II subunit alpha-2 (90 aa).

Residues 40–48 and Lys-63 contribute to the ATP site; that span reads VGRGKYSEV.

It belongs to the protein kinase superfamily. Ser/Thr protein kinase family. CK2 subfamily.

The Nipponbare allele of HD6 contains a premature stop codon, resulting in a truncated non-functional product. This Oryza sativa subsp. japonica (Rice) protein is Inactive casein kinase II subunit alpha-2.